Reading from the N-terminus, the 150-residue chain is Snaclec CTL-Eoc125 (150 aa).

A signal peptide spans 1–23 (MGRFISVSFGLLVVFLSLSGIGA). 3 disulfide bridges follow: Cys-27/Cys-38, Cys-55/Cys-144, and Cys-121/Cys-136. The C-type lectin domain maps to 34–145 (YEGHCYKVFS…CSSTQQFICK (112 aa)).

Belongs to the snaclec family. In terms of assembly, heterodimer; disulfide-linked. As to expression, expressed by the venom gland.

It is found in the secreted. In terms of biological role, interferes with one step of hemostasis (modulation of platelet aggregation, or coagulation cascade, for example). This chain is Snaclec CTL-Eoc125, found in Echis ocellatus (Ocellated saw-scaled viper).